A 154-amino-acid chain; its full sequence is Myoglobin (154 aa).

Residues 2-148 form the Globin domain; it reads GLSDGEWQLV…FRNDMAAKYK (147 aa). A Phosphoserine modification is found at Ser4. Residue His65 coordinates nitrite. Residue His65 participates in O2 binding. Phosphothreonine is present on Thr68. His94 contributes to the heme b binding site.

This sequence belongs to the globin family. As to quaternary structure, monomeric.

The protein localises to the cytoplasm. The protein resides in the sarcoplasm. It carries out the reaction Fe(III)-heme b-[protein] + nitric oxide + H2O = Fe(II)-heme b-[protein] + nitrite + 2 H(+). The catalysed reaction is H2O2 + AH2 = A + 2 H2O. Its function is as follows. Monomeric heme protein which primary function is to store oxygen and facilitate its diffusion within muscle tissues. Reversibly binds oxygen through a pentacoordinated heme iron and enables its timely and efficient release as needed during periods of heightened demand. Depending on the oxidative conditions of tissues and cells, and in addition to its ability to bind oxygen, it also has a nitrite reductase activity whereby it regulates the production of bioactive nitric oxide. Under stress conditions, like hypoxia and anoxia, it also protects cells against reactive oxygen species thanks to its pseudoperoxidase activity. The sequence is that of Myoglobin (MB) from Ornithorhynchus anatinus (Duckbill platypus).